The chain runs to 439 residues: Secreted aspartic protease LUC8 (439 aa).

The first 20 residues, 1-20 (MMHAFHHLAVLLIGSLPASA), serve as a signal peptide directing secretion. Residues Asn-33 and Asn-54 are each glycosylated (N-linked (GlcNAc...) asparagine). In terms of domain architecture, Peptidase A1 spans 51–435 (YLFNITVGTP…DFETQSFGLA (385 aa)). Asp-69 is a catalytic residue. 4 N-linked (GlcNAc...) asparagine glycosylation sites follow: Asn-110, Asn-126, Asn-179, and Asn-289. The active site involves Asp-300. Residues Asn-329 and Asn-373 are each glycosylated (N-linked (GlcNAc...) asparagine). A disulfide bridge connects residues Cys-355 and Cys-391.

It belongs to the peptidase A1 family.

Its subcellular location is the secreted. Secreted aspartic protease; part of the gene cluster that mediates the biosynthesis of the mycotoxin lucilactaene and the lucilactaene-related compound NG-391 that act as cell cycle inhibitors with potent growth inhibitory activity against malarial parasites, moderate growth inhibitory activity against cancer cells, and no activity against bacteria and fungi. Within the cluster, LUC7 and LUC8 encode proteins which are not commonly involved in the biosynthesis of secondary metabolites and are not essential for lucilactaene biosynthesis. In Fusarium sp, this protein is Secreted aspartic protease LUC8.